We begin with the raw amino-acid sequence, 178 residues long: ATP-dependent protease subunit HslV (178 aa).

Thr5 is a catalytic residue. Residues Ala160, Cys163, and Thr166 each contribute to the Na(+) site.

This sequence belongs to the peptidase T1B family. HslV subfamily. A double ring-shaped homohexamer of HslV is capped on each side by a ring-shaped HslU homohexamer. The assembly of the HslU/HslV complex is dependent on binding of ATP.

Its subcellular location is the cytoplasm. The enzyme catalyses ATP-dependent cleavage of peptide bonds with broad specificity.. With respect to regulation, allosterically activated by HslU binding. Protease subunit of a proteasome-like degradation complex believed to be a general protein degrading machinery. In Magnetococcus marinus (strain ATCC BAA-1437 / JCM 17883 / MC-1), this protein is ATP-dependent protease subunit HslV.